A 274-amino-acid chain; its full sequence is Peroxiredoxin-4 (274 aa).

A signal peptide spans M1 to G40. Residues A82 to Y240 form the Thioredoxin domain. C127 (cysteine sulfenic acid (-SOH) intermediate) is an active-site residue.

This sequence belongs to the peroxiredoxin family. AhpC/Prx1 subfamily. As to quaternary structure, homodimer; disulfide-linked, upon oxidation. 5 homodimers assemble to form a ring-like decamer. Post-translationally, the enzyme can be inactivated by further oxidation of the cysteine sulfenic acid (C(P)-SOH) to sulphinic acid (C(P)-SO2H) and sulphonic acid (C(P)-SO3H) instead of its condensation to a disulfide bond.

The protein resides in the cytoplasm. The protein localises to the endoplasmic reticulum. The enzyme catalyses a hydroperoxide + [thioredoxin]-dithiol = an alcohol + [thioredoxin]-disulfide + H2O. Functionally, thiol-specific peroxidase that catalyzes the reduction of hydrogen peroxide and organic hydroperoxides to water and alcohols, respectively. Plays a role in cell protection against oxidative stress by detoxifying peroxides and as sensor of hydrogen peroxide-mediated signaling events. Regulates the activation of NF-kappa-B in the cytosol by a modulation of I-kappa-B-alpha phosphorylation. In Mus musculus (Mouse), this protein is Peroxiredoxin-4 (Prdx4).